An 85-amino-acid polypeptide reads, in one-letter code: SKP1-like protein 6 (85 aa).

The tract at residues 65–85 (MMAANYLNIQSLLDLTFSNCR) is interaction with the F-box domain of F-box proteins.

The protein belongs to the SKP1 family. Part of a SCF (SKP1-cullin-F-box) protein ligase complex.

It is found in the nucleus. Its pathway is protein modification; protein ubiquitination. Its function is as follows. Involved in ubiquitination and subsequent proteasomal degradation of target proteins. Together with CUL1, RBX1 and a F-box protein, it forms a SCF E3 ubiquitin ligase complex. The functional specificity of this complex depends on the type of F-box protein. In the SCF complex, it serves as an adapter that links the F-box protein to CUL1. This chain is SKP1-like protein 6 (ASK6), found in Arabidopsis thaliana (Mouse-ear cress).